A 358-amino-acid chain; its full sequence is Acetylxylan esterase / glucomannan deacetylase (358 aa).

The first 18 residues, 1–18 (MKLLFPILLLTGSYFLSA), serve as a signal peptide directing secretion. The N-palmitoyl cysteine moiety is linked to residue C19. A lipid anchor (S-diacylglycerol cysteine) is attached at C19. The active-site Nucleophile is the S160. Active-site charge relay system residues include D333 and H335.

It belongs to the carbohydrate esterase 2 (CE2) family.

The protein resides in the cell membrane. The enzyme catalyses Deacetylation of xylans and xylo-oligosaccharides.. It functions in the pathway glycan degradation; xylan degradation. In terms of biological role, involved in the degradation of plant cell wall polysaccharides. Catalyzes the deacetylation of acetylated birchwood xylan and glucomannan, with equal efficiency, and of the synthetic substrate 4-nitrophenyl acetate (4-NPAc). Does not bind cellulose, cellohexaose and beta-glucan. The sequence is that of Acetylxylan esterase / glucomannan deacetylase from Cellvibrio japonicus (strain Ueda107) (Pseudomonas fluorescens subsp. cellulosa).